We begin with the raw amino-acid sequence, 1240 residues long: ABC transporter B family member 15 (1240 aa).

The next 6 membrane-spanning stretches (helical) occupy residues 35–55 (MGLG…VLLI), 82–102 (VALL…GYCW), 158–180 (LPNF…ILLW), 184–206 (IVGL…ALIS), 264–284 (GITI…SWYG), and 296–316 (GTVF…GGGL). In terms of domain architecture, ABC transmembrane type-1 1 spans 35-324 (MGLGLIGAVG…GLSNLKYFFE (290 aa)). The region spanning 359 to 595 (VEFKNVKFVY…IDGQYSTLVH (237 aa)) is the ABC transporter 1 domain. 394 to 401 (GGSGSGKS) is an ATP binding site. Residues Asn-542, Asn-605, and Asn-622 are each glycosylated (N-linked (GlcNAc...) asparagine). A disordered region spans residues 617-646 (SKDIRNSSRVSTLSRSSSANSVTGPSTIKN). A compositionally biased stretch (low complexity) spans 623–639 (SSRVSTLSRSSSANSVT). Residue Asn-646 is glycosylated (N-linked (GlcNAc...) asparagine). In terms of domain architecture, ABC transmembrane type-1 2 spans 672–960 (ALYGCISATL…AGSMTTDLAK (289 aa)). 2 helical membrane-spanning segments follow: residues 681 to 701 (LFGA…SVYF) and 714 to 734 (IYAL…ISQH). Residue Asn-769 is glycosylated (N-linked (GlcNAc...) asparagine). The next 4 membrane-spanning stretches (helical) occupy residues 794 to 813 (ALVV…GLVI), 817 to 839 (LALV…RVLL), 895 to 915 (SWFA…TWAL), and 923 to 943 (LIQD…ILVS). Residues 995-1233 (VEFLDVDFSY…GPTGIYFSLV (239 aa)) enclose the ABC transporter 2 domain. Asn-1015 carries N-linked (GlcNAc...) asparagine glycosylation. Residue 1030–1037 (GPSGSGKS) coordinates ATP.

It belongs to the ABC transporter superfamily. ABCB family. Multidrug resistance exporter (TC 3.A.1.201) subfamily.

Its subcellular location is the membrane. This is ABC transporter B family member 15 (ABCB15) from Arabidopsis thaliana (Mouse-ear cress).